The primary structure comprises 231 residues: Sensory transduction protein BceR (231 aa).

The Response regulatory domain maps to 3 to 116 (KIMLIEDDHT…VLVAKIQAIL (114 aa)). Asp-52 is modified (4-aspartylphosphate). Positions 127–225 (TQLKTWCGAT…KVGQGYMAKE (99 aa)) form a DNA-binding region, ompR/PhoB-type.

Phosphorylated by BceS.

It is found in the cytoplasm. Functionally, member of the two-component regulatory system BceS/BceR involved in the regulation of bacitracin resistance. When activated by BceS, binds to the upstream region of the bceAB promoter and up-regulates the expression of these two genes. The sequence is that of Sensory transduction protein BceR (bceR) from Halalkalibacterium halodurans (strain ATCC BAA-125 / DSM 18197 / FERM 7344 / JCM 9153 / C-125) (Bacillus halodurans).